Reading from the N-terminus, the 273-residue chain is Testis-specific serine/threonine-protein kinase 6 (273 aa).

The Protein kinase domain maps to 12 to 267; the sequence is YKLGRTIGEG…AGQVARNCWL (256 aa). ATP-binding positions include 18 to 26 and Lys41; that span reads IGEGSYSKV. Asp135 functions as the Proton acceptor in the catalytic mechanism.

Belongs to the protein kinase superfamily. CAMK Ser/Thr protein kinase family. As to quaternary structure, microtubule inner protein component of sperm flagellar doublet microtubules. Interacts with HSP90; this interaction stabilizes and activates TSSK6. Interacts with the heat shock proteins HSPCB, HSPA8 and HSPA1A. These interactions appear to be required for TSSK6 kinase activity. Interacts with TSACC; this interaction is direct and recruits TSACC to HSP90, which is essential for kinase activity. Requires Mg(2+) as cofactor. In terms of processing, autophosphorylated. Ubiquitinated; HSP90 activity negatively regulates ubiquitination and degradation. In terms of tissue distribution, highly expressed in testis. Expressed at lower levels in colon, small intestine, ovary, prostate, thymus, spleen and peripheral blood leukocytes.

It is found in the cytoplasm. The protein localises to the cytoskeleton. Its subcellular location is the flagellum axoneme. The protein resides in the nucleus. It carries out the reaction L-seryl-[protein] + ATP = O-phospho-L-seryl-[protein] + ADP + H(+). The catalysed reaction is L-threonyl-[protein] + ATP = O-phospho-L-threonyl-[protein] + ADP + H(+). In terms of biological role, serine/threonine-protein kinase component of the sperm flagellar doublet microtubules. May act as a regulator of sperm motility by mediating phosphorylation of sperm doublet microtubule proteins. Plays a role in DNA condensation during postmeiotic chromatin remodeling and histone-to-protamine transition during spermatogenesis. The chain is Testis-specific serine/threonine-protein kinase 6 from Homo sapiens (Human).